A 438-amino-acid polypeptide reads, in one-letter code: MVKRSLLVLALLICLPATLFAQYDYVRISNPFLHKIPIAVPLFQALTGTEPEVKAAQSGADLLADTLEFTRYFNLINRAAFLERPDRTGVTLADIDCKNWRDIGAEFLITGGVTVAGGMMEMELRLFDVFKERMILGKKYKGKPVDQRKMIRRFCAEVMEQLTGTPGIFESRIAFISTGDGSKEIYACEFDGYNPQRITRNSSINLSPAWSSDGQWLAYTSYRKGGPDLYITHLTENRGTVFSKEGINIAPSWVPGQFMLAATLSFEGDQEIYLLTGSGTVVRRLTRSWGIDVSPTFSPDGKRMAFVSGRAGSPQIFIMDMGSGRTQRLTFEGGYNTNPSWNPVNDTIAYCAMTGGAFNVRVIDVKTGATVALTADQGDNESPSWSPDGSLIAFSSTREAGVSRIYVMTAAGTDPRRLLILPGEQTGPKWSPAVAAGR.

The signal sequence occupies residues methionine 1–alanine 21.

Belongs to the TolB family. As to quaternary structure, the Tol-Pal system is composed of five core proteins: the inner membrane proteins TolA, TolQ and TolR, the periplasmic protein TolB and the outer membrane protein Pal. They form a network linking the inner and outer membranes and the peptidoglycan layer.

It localises to the periplasm. Its function is as follows. Part of the Tol-Pal system, which plays a role in outer membrane invagination during cell division and is important for maintaining outer membrane integrity. This Desulfosudis oleivorans (strain DSM 6200 / JCM 39069 / Hxd3) (Desulfococcus oleovorans) protein is Tol-Pal system protein TolB.